Reading from the N-terminus, the 278-residue chain is UPF0758 protein BURPS1106A_0984 (278 aa).

Residues 1-64 (MQYEIVSAGE…ATAAARRGRD (64 aa)) form a disordered region. Low complexity predominate over residues 22–59 (AAAPAAPSSAVPSSAALSSAALSSAAQPTGAPPATAAA). An MPN domain is found at 156 to 278 (LVDSPGAVDD…TFSFAQAGWI (123 aa)). Zn(2+) contacts are provided by His-227, His-229, and Asp-240. A JAMM motif motif is present at residues 227-240 (HNHPSGAVRPSAAD).

This sequence belongs to the UPF0758 family.

The polypeptide is UPF0758 protein BURPS1106A_0984 (Burkholderia pseudomallei (strain 1106a)).